The primary structure comprises 260 residues: Putative ABC transporter ATP-binding protein PH0132 (260 aa).

Residues 2–234 (IEFRDVWFWY…DLEGFGLKEP (233 aa)) form the ABC transporter domain. 34 to 41 (GPNGSGKT) lines the ATP pocket.

It belongs to the ABC transporter superfamily.

It is found in the cell membrane. Its function is as follows. Probably part of an ABC transporter complex. Responsible for energy coupling to the transport system. In Pyrococcus horikoshii (strain ATCC 700860 / DSM 12428 / JCM 9974 / NBRC 100139 / OT-3), this protein is Putative ABC transporter ATP-binding protein PH0132.